A 368-amino-acid chain; its full sequence is Alanine racemase (368 aa).

Lys34 acts as the Proton acceptor; specific for D-alanine in catalysis. Lys34 carries the post-translational modification N6-(pyridoxal phosphate)lysine. Residue Arg132 participates in substrate binding. Tyr261 (proton acceptor; specific for L-alanine) is an active-site residue. Met309 is a substrate binding site.

The protein belongs to the alanine racemase family. The cofactor is pyridoxal 5'-phosphate.

It carries out the reaction L-alanine = D-alanine. Its pathway is amino-acid biosynthesis; D-alanine biosynthesis; D-alanine from L-alanine: step 1/1. In terms of biological role, catalyzes the interconversion of L-alanine and D-alanine. May also act on other amino acids. In Carboxydothermus hydrogenoformans (strain ATCC BAA-161 / DSM 6008 / Z-2901), this protein is Alanine racemase (alr).